A 243-amino-acid chain; its full sequence is Probable ubiquitin-conjugating enzyme E2 33 (243 aa).

In terms of domain architecture, UBC core spans 5 to 162; sequence ACIKRLQKEY…FPEYVEKYSQ (158 aa). Catalysis depends on C87, which acts as the Glycyl thioester intermediate. A disordered region spans residues 168 to 197; the sequence is EEAATQQTTTSENQDFPQKDNAKVESEKSV. Residues 184-197 are compositionally biased toward basic and acidic residues; the sequence is PQKDNAKVESEKSV. A helical transmembrane segment spans residues 220 to 240; that stretch reads LPGWIVLLLVSIVGVVMALPL.

This sequence belongs to the ubiquitin-conjugating enzyme family.

The protein localises to the membrane. It catalyses the reaction S-ubiquitinyl-[E1 ubiquitin-activating enzyme]-L-cysteine + [E2 ubiquitin-conjugating enzyme]-L-cysteine = [E1 ubiquitin-activating enzyme]-L-cysteine + S-ubiquitinyl-[E2 ubiquitin-conjugating enzyme]-L-cysteine.. The protein operates within protein modification; protein ubiquitination. In terms of biological role, accepts the ubiquitin from the E1 complex and catalyzes its covalent attachment to other proteins. This chain is Probable ubiquitin-conjugating enzyme E2 33 (UBC33), found in Arabidopsis thaliana (Mouse-ear cress).